A 129-amino-acid polypeptide reads, in one-letter code: Thioredoxin-like 3-3 (129 aa).

Over residues 1-10 the composition is skewed to basic and acidic residues; that stretch reads MEEGEAKKTG. The disordered stretch occupies residues 1-30; that stretch reads MEEGEAKKTGLEGTGLSLPGSSHGNLRSAG. One can recognise a Thioredoxin domain in the interval 7–129; sequence KKTGLEGTGL…RLHDRLWLHS (123 aa). A compositionally biased stretch (polar residues) spans 19 to 30; the sequence is PGSSHGNLRSAG. Active-site nucleophile residues include Cys58 and Cys61. Cys58 and Cys61 form a disulfide bridge.

It belongs to the thioredoxin family.

In terms of biological role, probable thiol-disulfide oxidoreductase that may participate in various redox reactions. This Oryza sativa subsp. japonica (Rice) protein is Thioredoxin-like 3-3.